A 138-amino-acid polypeptide reads, in one-letter code: MRIMGLDVGSKTVGVAISDPLGWTAQGVETIQIDENRKQFGYDRVKELVLEYEVEKVVVGLPKNMNNTIGPRAESSKIYAEVLEARIGLPVVLWDERLTTSAAERTLIEADVSRKKRKEVIDKLAAVMILQSYLDTTN.

Belongs to the YqgF nuclease family.

It is found in the cytoplasm. Could be a nuclease involved in processing of the 5'-end of pre-16S rRNA. In Listeria monocytogenes serovar 1/2a (strain ATCC BAA-679 / EGD-e), this protein is Putative pre-16S rRNA nuclease.